A 194-amino-acid chain; its full sequence is NADH-quinone oxidoreductase subunit B (194 aa).

4 residues coordinate [4Fe-4S] cluster: cysteine 72, cysteine 73, cysteine 137, and cysteine 167.

The protein belongs to the complex I 20 kDa subunit family. In terms of assembly, NDH-1 is composed of 14 different subunits. Subunits NuoB, C, D, E, F, and G constitute the peripheral sector of the complex. The cofactor is [4Fe-4S] cluster.

Its subcellular location is the cell inner membrane. It catalyses the reaction a quinone + NADH + 5 H(+)(in) = a quinol + NAD(+) + 4 H(+)(out). In terms of biological role, NDH-1 shuttles electrons from NADH, via FMN and iron-sulfur (Fe-S) centers, to quinones in the respiratory chain. Couples the redox reaction to proton translocation (for every two electrons transferred, four hydrogen ions are translocated across the cytoplasmic membrane), and thus conserves the redox energy in a proton gradient. This Granulibacter bethesdensis (strain ATCC BAA-1260 / CGDNIH1) protein is NADH-quinone oxidoreductase subunit B.